Here is a 530-residue protein sequence, read N- to C-terminus: Light-harvesting complex I LH38 proteins (530 aa).

It is found in the plastid. Its subcellular location is the chloroplast. The protein is Light-harvesting complex I LH38 proteins of Euglena gracilis.